The following is a 373-amino-acid chain: T-protein (373 aa).

Residues Met1–Gly90 enclose the Chorismate mutase domain. The Prephenate/arogenate dehydrogenase domain maps to Arg99–Ser361.

It in the C-terminal section; belongs to the prephenate/arogenate dehydrogenase family.

The protein localises to the cytoplasm. It catalyses the reaction chorismate = prephenate. It carries out the reaction prephenate + NAD(+) = 3-(4-hydroxyphenyl)pyruvate + CO2 + NADH. The protein operates within amino-acid biosynthesis; L-tyrosine biosynthesis; (4-hydroxyphenyl)pyruvate from prephenate (NAD(+) route): step 1/1. Its pathway is metabolic intermediate biosynthesis; prephenate biosynthesis; prephenate from chorismate: step 1/1. The protein is T-protein (tyrA) of Enterobacter agglomerans (Erwinia herbicola).